Consider the following 295-residue polypeptide: Taste receptor type 2 member 120 (295 aa).

Residues 1 to 5 (MNLVE) are Extracellular-facing. A helical membrane pass occupies residues 6-26 (WIVTIIMMTEFLLGNCANVFI). The Cytoplasmic portion of the chain corresponds to 27–45 (TIVNFIDCVKRRKISSADR). A helical membrane pass occupies residues 46–66 (IITAIAIFRIGLLWAMLTNWH). Over 67–80 (SHVFTPDTDNLQMR) the chain is Extracellular. A helical membrane pass occupies residues 81–101 (VFGGITWAITNHFTTWLGTIL). At 102-127 (SMFYLFKIANFSNSLFLHLKRKLDNV) the chain is on the cytoplasmic side. A helical membrane pass occupies residues 128-148 (LLVIFLGSSLFLVAYLGMVNI). Residues 149-177 (KKIAWMSIHEGNVTTKSKLKHVTSITNML) are Extracellular-facing. The N-linked (GlcNAc...) asparagine glycan is linked to N160. Residues 178 to 198 (LFSLINIVPFGISLNCVLLLI) form a helical membrane-spanning segment. Residues 199–228 (YSLSKHLKNMKFYGKGCQDQSTMVHIKALQ) are Cytoplasmic-facing. A helical transmembrane segment spans residues 229 to 249 (TVVSFLLLYATYSSCVIISGW). Over 250-255 (SLQNAP) the chain is Extracellular. The helical transmembrane segment at 256-276 (VFLFCVTIGSFYPAGHSCILI) threads the bilayer. Topologically, residues 277–295 (WGNQKLKQVFLLLLRQMRC) are cytoplasmic.

The protein belongs to the G-protein coupled receptor T2R family.

It is found in the membrane. Putative taste receptor which may play a role in the perception of bitterness. The protein is Taste receptor type 2 member 120 of Mus musculus (Mouse).